The chain runs to 100 residues: Large ribosomal subunit protein eL30 (100 aa).

Belongs to the eukaryotic ribosomal protein eL30 family.

The chain is Large ribosomal subunit protein eL30 (rpl30e) from Aeropyrum pernix (strain ATCC 700893 / DSM 11879 / JCM 9820 / NBRC 100138 / K1).